The chain runs to 217 residues: External core antigen (217 aa).

An N-terminal signal peptide occupies residues 1 to 19; that stretch reads MYLFHLCLVFACVPCPTFQ. An HBEAG region spans residues 26–28; that stretch reads GWL. The disordered stretch occupies residues 180-217; it reads RRGGARASRSPRRRTPSPRRRRSQSPRRRRSQSPSANC. Positions 188 to 210 are enriched in basic residues; that stretch reads RSPRRRTPSPRRRRSQSPRRRRS. The stretch at 189 to 195 is one 1; half-length repeat; it reads SPRRRTP. The 3 X 8 AA repeats of S-P-R-R-R-R-S-Q stretch occupies residues 189-211; it reads SPRRRTPSPRRRRSQSPRRRRSQ. Residues 189–217 constitute a propeptide that is removed on maturation; sequence SPRRRTPSPRRRRSQSPRRRRSQSPSANC. 2 repeat units span residues 196 to 203 and 204 to 211.

This sequence belongs to the orthohepadnavirus precore antigen family. Homodimerizes. In terms of processing, phosphorylated. Post-translationally, cleaved by host furin.

It is found in the secreted. It localises to the host nucleus. In terms of biological role, may regulate immune response to the intracellular capsid in acting as a T-cell tolerogen, by having an immunoregulatory effect which prevents destruction of infected cells by cytotoxic T-cells. This immune regulation may predispose to chronicity during perinatal infections and prevent severe liver injury during adult infections. The protein is External core antigen of Marmota monax (Woodchuck).